The primary structure comprises 88 residues: Putative defensin-like protein 228 (88 aa).

Residues 1 to 27 form the signal peptide; sequence MMKSAILLMVSCVFMFLVVSYIQDVEG. 4 disulfides stabilise this stretch: Cys-32-Cys-88, Cys-42-Cys-66, Cys-50-Cys-82, and Cys-64-Cys-84.

The protein belongs to the DEFL family.

The protein localises to the secreted. In Arabidopsis thaliana (Mouse-ear cress), this protein is Putative defensin-like protein 228 (SCRL3).